We begin with the raw amino-acid sequence, 301 residues long: Protoheme IX farnesyltransferase (301 aa).

8 helical membrane-spanning segments follow: residues 30–50 (VISL…PKAI), 55–75 (IIVS…GGMI), 106–126 (AYAI…LANP), 127–147 (LTAL…SIWL), 152–172 (WWNI…GFAA), 177–197 (FTLL…GHFW), 233–253 (ALMV…YLIV), and 281–301 (FKLS…VKLI).

It belongs to the UbiA prenyltransferase family. Protoheme IX farnesyltransferase subfamily.

It is found in the cell membrane. It catalyses the reaction heme b + (2E,6E)-farnesyl diphosphate + H2O = Fe(II)-heme o + diphosphate. Its pathway is porphyrin-containing compound metabolism; heme O biosynthesis; heme O from protoheme: step 1/1. In terms of biological role, converts heme B (protoheme IX) to heme O by substitution of the vinyl group on carbon 2 of heme B porphyrin ring with a hydroxyethyl farnesyl side group. This is Protoheme IX farnesyltransferase from Sulfurisphaera tokodaii (strain DSM 16993 / JCM 10545 / NBRC 100140 / 7) (Sulfolobus tokodaii).